The sequence spans 257 residues: BTB/POZ domain-containing protein kctd15-like (257 aa).

Residues Ser9 and Ser12 each carry the phosphoserine modification. One can recognise a BTB domain in the interval 30 to 100 (APVHIDVGGH…LRTSKLLLPE (71 aa)).

This chain is BTB/POZ domain-containing protein kctd15-like (kctd15l), found in Danio rerio (Zebrafish).